The chain runs to 472 residues: Argininosuccinate lyase (472 aa).

The protein belongs to the lyase 1 family. Argininosuccinate lyase subfamily.

Its subcellular location is the cytoplasm. It carries out the reaction 2-(N(omega)-L-arginino)succinate = fumarate + L-arginine. The protein operates within amino-acid biosynthesis; L-arginine biosynthesis; L-arginine from L-ornithine and carbamoyl phosphate: step 3/3. The protein is Argininosuccinate lyase of Synechococcus sp. (strain CC9605).